The following is a 145-amino-acid chain: 3-hydroxyacyl-[acyl-carrier-protein] dehydratase FabZ (145 aa).

His47 is a catalytic residue.

This sequence belongs to the thioester dehydratase family. FabZ subfamily.

Its subcellular location is the cytoplasm. It catalyses the reaction a (3R)-hydroxyacyl-[ACP] = a (2E)-enoyl-[ACP] + H2O. Functionally, involved in unsaturated fatty acids biosynthesis. Catalyzes the dehydration of short chain beta-hydroxyacyl-ACPs and long chain saturated and unsaturated beta-hydroxyacyl-ACPs. The protein is 3-hydroxyacyl-[acyl-carrier-protein] dehydratase FabZ of Vesicomyosocius okutanii subsp. Calyptogena okutanii (strain HA).